A 172-amino-acid chain; its full sequence is 3-hydroxydecanoyl-[acyl-carrier-protein] dehydratase (172 aa).

Histidine 71 is a catalytic residue.

Belongs to the thioester dehydratase family. FabA subfamily. As to quaternary structure, homodimer.

Its subcellular location is the cytoplasm. It carries out the reaction a (3R)-hydroxyacyl-[ACP] = a (2E)-enoyl-[ACP] + H2O. It catalyses the reaction (3R)-hydroxydecanoyl-[ACP] = (2E)-decenoyl-[ACP] + H2O. The catalysed reaction is (2E)-decenoyl-[ACP] = (3Z)-decenoyl-[ACP]. Its pathway is lipid metabolism; fatty acid biosynthesis. In terms of biological role, necessary for the introduction of cis unsaturation into fatty acids. Catalyzes the dehydration of (3R)-3-hydroxydecanoyl-ACP to E-(2)-decenoyl-ACP and then its isomerization to Z-(3)-decenoyl-ACP. Can catalyze the dehydratase reaction for beta-hydroxyacyl-ACPs with saturated chain lengths up to 16:0, being most active on intermediate chain length. This is 3-hydroxydecanoyl-[acyl-carrier-protein] dehydratase from Vibrio cholerae serotype O1 (strain ATCC 39541 / Classical Ogawa 395 / O395).